Reading from the N-terminus, the 874-residue chain is Leucine--tRNA ligase (874 aa).

The 'HIGH' region signature appears at 43-53; the sequence is PYPSGRIHIGH. The short motif at 630 to 634 is the 'KMSKS' region element; it reads KMSKS. An ATP-binding site is contributed by Lys-633.

The protein belongs to the class-I aminoacyl-tRNA synthetase family.

It localises to the cytoplasm. The enzyme catalyses tRNA(Leu) + L-leucine + ATP = L-leucyl-tRNA(Leu) + AMP + diphosphate. The chain is Leucine--tRNA ligase from Bradyrhizobium sp. (strain ORS 278).